A 123-amino-acid chain; its full sequence is MHYCNKDIGSFGETIAVDYIKNCGYIILEKNFRCKLGEIDIIAKDKNFIVFIEVKTRYSYIYGSPSEAITFRKQNKIYKTAQLYIIKKAIHNKFYFRFDVIEVILNTLNSNYSVKLIKNAFQI.

It belongs to the UPF0102 family.

In Clostridium botulinum (strain Kyoto / Type A2), this protein is UPF0102 protein CLM_2733.